The following is a 358-amino-acid chain: U5 small nuclear ribonucleoprotein 40 kDa protein (358 aa).

Lys-18 is covalently cross-linked (Glycyl lysine isopeptide (Lys-Gly) (interchain with G-Cter in SUMO2)). The residue at position 21 (Arg-21) is an Asymmetric dimethylarginine. 7 WD repeats span residues 65–104 (GHEG…DNYA), 108–147 (GHSG…RVKR), 150–190 (GHTS…AVQT), 192–231 (QNTY…LTYT), 234–273 (GHAD…PKER), 284–323 (NFEK…VLYK), and 326–358 (GHAG…GEIQ). Lys-271 is covalently cross-linked (Glycyl lysine isopeptide (Lys-Gly) (interchain with G-Cter in SUMO2)).

In terms of assembly, component of the pre-catalytic and catalytic spliceosome complexes. Component of the postcatalytic spliceosome P complex. Part of the U5 snRNP complex. Interacts with PRPF8. Component of the U4/U6-U5 tri-snRNP complex composed of the U4, U6 and U5 snRNAs and at least PRPF3, PRPF4, PRPF6, PRPF8, PRPF31, SNRNP200, TXNL4A, WDR57, SNRNP40, DDX23, CD2BP2, PPIH, SNU13, EFTUD2, SART1 and USP39. Component of the minor spliceosome, which splices U12-type introns.

It is found in the nucleus. In terms of biological role, required for pre-mRNA splicing as component of the activated spliceosome. Component of the U5 small nuclear ribonucleoprotein (snRNP) complex and the U4/U6-U5 tri-snRNP complex, building blocks of the spliceosome. As a component of the minor spliceosome, involved in the splicing of U12-type introns in pre-mRNAs. The chain is U5 small nuclear ribonucleoprotein 40 kDa protein (Snrnp40) from Mus musculus (Mouse).